A 414-amino-acid polypeptide reads, in one-letter code: Mannan endo-1,4-beta-mannosidase 2 (414 aa).

Residues 1–25 (MAYFQRLISCIFVLFLLSLAFACEA) form the signal peptide. Substrate-binding residues include Trp-95 and Asn-210. Glu-211 acts as the Proton donor in catalysis. A substrate-binding site is contributed by Tyr-288. Glu-328 (nucleophile) is an active-site residue. A substrate-binding site is contributed by Trp-370.

Belongs to the glycosyl hydrolase 5 (cellulase A) family.

The protein resides in the secreted. The enzyme catalyses Random hydrolysis of (1-&gt;4)-beta-D-mannosidic linkages in mannans, galactomannans and glucomannans.. Its function is as follows. Possesses endo-beta-mannanase activity in vitro. May be involved in seed germination by weakening the endosperm cap prior to radicle emergence. This Solanum lycopersicum (Tomato) protein is Mannan endo-1,4-beta-mannosidase 2 (MAN2).